A 409-amino-acid chain; its full sequence is Casein kinase I isoform delta-B (409 aa).

Positions 9–277 (YRLGRKIGSG…YLRQLFRNLF (269 aa)) constitute a Protein kinase domain. ATP contacts are provided by residues 15-23 (IGSGSFGDI) and Lys38. The active-site Proton acceptor is Asp128. A compositionally biased stretch (basic and acidic residues) spans 300 to 315 (TAEEADRERRERDERM). The interval 300-409 (TAEEADRERR…NSIPFDHHGK (110 aa)) is disordered. An autoinhibitory region spans residues 317-341 (HSRNPAARGIPAASGRPRPTQDGAP). 2 stretches are compositionally biased toward polar residues: residues 346-358 (TPTSHTANTSSPR) and 380-402 (NVSSSDLTGRQDTSRMSTSQNSI).

Belongs to the protein kinase superfamily. Monomer. Interacts with per1 and per2. Component of the circadian core oscillator. Post-translationally, autophosphorylated on serine and threonine residues.

Its subcellular location is the cytoplasm. The protein resides in the nucleus. It catalyses the reaction L-seryl-[protein] + ATP = O-phospho-L-seryl-[protein] + ADP + H(+). It carries out the reaction L-threonyl-[protein] + ATP = O-phospho-L-threonyl-[protein] + ADP + H(+). Exhibits substrate-dependent heparin activation. Functionally, casein kinases are operationally defined by their preferential utilization of acidic proteins such as caseins as substrates. Central component of the circadian clock. May act as a negative regulator of circadian rhythmicity by phosphorylating per1 and per2, which may lead to their degradation. Participates in wnt signaling. The chain is Casein kinase I isoform delta-B (csnk1db) from Danio rerio (Zebrafish).